The following is a 370-amino-acid chain: (5-formylfuran-3-yl)methyl phosphate transaminase (370 aa).

Residue Lys-222 is modified to N6-(pyridoxal phosphate)lysine.

Belongs to the class-I pyridoxal-phosphate-dependent aminotransferase family. As to quaternary structure, homodimer. Requires pyridoxal 5'-phosphate as cofactor.

Its subcellular location is the cytoplasm. The enzyme catalyses 4-(hydroxymethyl)-2-furancarboxaldehyde phosphate + L-alanine = [5-(aminomethyl)-3-furyl]methyl phosphate + pyruvate. Its pathway is cofactor biosynthesis; methanofuran biosynthesis. Catalyzes the transamination reaction between 4-(hydroxymethyl)-2-furancarboxaldehyde phosphate (4-HFC-P) and alanine to produce pyruvate and 5-(aminomethyl)-3-furanmethanol phosphate (F1-P), the precursor for the furan moiety in methanofuran. This is (5-formylfuran-3-yl)methyl phosphate transaminase from Methanocaldococcus jannaschii (strain ATCC 43067 / DSM 2661 / JAL-1 / JCM 10045 / NBRC 100440) (Methanococcus jannaschii).